The sequence spans 285 residues: Iodotyrosine deiodinase 1 (285 aa).

The helical transmembrane segment at 1-21 (MFLLTPVLVAVVCILVVWVFK) threads the bilayer. FMN contacts are provided by residues 96-100 (RRSVR) and 124-125 (SG). 3,5-diiodo-L-tyrosine-binding residues include Ala126, Glu153, Tyr157, and Lys178. Ala126, Glu153, Tyr157, and Lys178 together coordinate 3-iodo-L-tyrosine. FMN contacts are provided by residues 233-235 (TTT) and Arg275.

The protein belongs to the nitroreductase family. In terms of assembly, homodimer. FMN serves as cofactor.

It is found in the cell membrane. It localises to the cytoplasmic vesicle membrane. The catalysed reaction is 2 iodide + L-tyrosine + 2 NADP(+) = 3,5-diiodo-L-tyrosine + 2 NADPH + H(+). It carries out the reaction iodide + L-tyrosine + NADP(+) = 3-iodo-L-tyrosine + NADPH. The enzyme catalyses 3-iodo-L-tyrosine + iodide + NADP(+) = 3,5-diiodo-L-tyrosine + NADPH + H(+). It catalyses the reaction L-tyrosine + chloride + NADP(+) = 3-chloro-L-tyrosine + NADPH. The catalysed reaction is bromide + L-tyrosine + NADP(+) = 3-bromo-L-tyrosine + NADPH. Its function is as follows. Catalyzes the dehalogenation of halotyrosines such as 3-bromo-L-tyrosine, 3-chloro-L-tyrosine, 3-iodo-L-tyrosine and 3,5-diiodo-L-tyrosine. During thyroid hormone biosynthesis, facilitates iodide salvage by catalysing the oxidative NADPH-dependent deiodination of the halogenated by-products of thyroid hormone production, monoiodotyrosine (L-MIT) and diiodotyrosine (L-DIT). The scavanged iodide can then reenter the hormone-producing pathways. Acts more efficiently on 3-iodo-L-tyrosine than 3,5-diiodo-L-tyrosine. The chain is Iodotyrosine deiodinase 1 (Iyd) from Mus musculus (Mouse).